Consider the following 71-residue polypeptide: Ceratotoxin-A (71 aa).

A signal peptide spans 1–23 (MANLKAVFLICIVAFIALQCVVA). Propeptides lie at residues 24 to 35 (EPAAEDSVVVKR) and 65 to 71 (VAAGLVG).

Homomer of four to six subunits.

The protein resides in the secreted. Functionally, female-specific peptides with potent activity against Gram-positive and Gram-negative bacteria. They have as well hemolytic activity. The chain is Ceratotoxin-A (CTXA1) from Ceratitis capitata (Mediterranean fruit fly).